Here is a 232-residue protein sequence, read N- to C-terminus: Ribose-5-phosphate isomerase A (232 aa).

Substrate contacts are provided by residues 31–34, 88–91, and 101–104; these read TGST, DGAD, and KGGG. Residue Glu110 is the Proton acceptor of the active site. Lys128 is a substrate binding site.

This sequence belongs to the ribose 5-phosphate isomerase family. In terms of assembly, homodimer.

It carries out the reaction aldehydo-D-ribose 5-phosphate = D-ribulose 5-phosphate. The protein operates within carbohydrate degradation; pentose phosphate pathway; D-ribose 5-phosphate from D-ribulose 5-phosphate (non-oxidative stage): step 1/1. Catalyzes the reversible conversion of ribose-5-phosphate to ribulose 5-phosphate. The sequence is that of Ribose-5-phosphate isomerase A from Lactobacillus johnsonii (strain CNCM I-12250 / La1 / NCC 533).